Reading from the N-terminus, the 212-residue chain is Imidazole glycerol phosphate synthase subunit HisH (212 aa).

One can recognise a Glutamine amidotransferase type-1 domain in the interval 3–212 (SIAVVDYGMG…LLSNFLKWTP (210 aa)). The active-site Nucleophile is Cys-82. Catalysis depends on residues His-192 and Glu-194.

As to quaternary structure, heterodimer of HisH and HisF.

It localises to the cytoplasm. It catalyses the reaction 5-[(5-phospho-1-deoxy-D-ribulos-1-ylimino)methylamino]-1-(5-phospho-beta-D-ribosyl)imidazole-4-carboxamide + L-glutamine = D-erythro-1-(imidazol-4-yl)glycerol 3-phosphate + 5-amino-1-(5-phospho-beta-D-ribosyl)imidazole-4-carboxamide + L-glutamate + H(+). It carries out the reaction L-glutamine + H2O = L-glutamate + NH4(+). It participates in amino-acid biosynthesis; L-histidine biosynthesis; L-histidine from 5-phospho-alpha-D-ribose 1-diphosphate: step 5/9. Functionally, IGPS catalyzes the conversion of PRFAR and glutamine to IGP, AICAR and glutamate. The HisH subunit catalyzes the hydrolysis of glutamine to glutamate and ammonia as part of the synthesis of IGP and AICAR. The resulting ammonia molecule is channeled to the active site of HisF. The chain is Imidazole glycerol phosphate synthase subunit HisH from Nitrosomonas europaea (strain ATCC 19718 / CIP 103999 / KCTC 2705 / NBRC 14298).